A 498-amino-acid chain; its full sequence is MTYLLALDQGTSSSRSIVFDERGHIVAQAQLELPQIYPQPGWVEHDPLEIWRTQIATARDALAKAGIAANAVRAVGITNQRETTVLWNRKTGQPVHHAIVWQDRRAEPACAQLREQGHAATIQAKTGLLIDAYFSGTKLQWLLDHVPGARDAAEAGELAFGTVDSWLIWQLTGGKRHVTDVSNASRTMLFNVHTNQWDDELLQLLRIPRALMPEVLPSASDFGATDAALLGGPIAIGGVAGDQQSALFGQACFTAGMAKNTYGTGCFMLMHTGSRFQKSENGLLTTSAAQAGQSPEYAMEGSVFVGGAVVQWLRDGLRAISASSEVQALAESVPDSGGVMMVPAFTGLGAPYWKPDARGTITGLTRGTTIAHIARAALESIAYQSAALLAAMSRDAVAAGGAPVSELRVDGGACVNDLLMQFQADLLGIPVVRPAVVETTALGAAYLAGLASGVYASTDELSALWQAERRFTPTLPRSQAEALMARWEHAVAQAVLPG.

Position 11 (Thr11) interacts with ADP. Thr11, Ser12, and Ser13 together coordinate ATP. Position 11 (Thr11) interacts with sn-glycerol 3-phosphate. Arg15 serves as a coordination point for ADP. Sn-glycerol 3-phosphate contacts are provided by Arg81, Glu82, Tyr133, and Asp242. Glycerol-binding residues include Arg81, Glu82, Tyr133, Asp242, and Gln243. The ADP site is built by Thr264 and Gly307. ATP contacts are provided by Thr264, Gly307, Gln311, and Gly412. Residues Gly412 and Asn416 each coordinate ADP.

This sequence belongs to the FGGY kinase family.

It catalyses the reaction glycerol + ATP = sn-glycerol 3-phosphate + ADP + H(+). Its pathway is polyol metabolism; glycerol degradation via glycerol kinase pathway; sn-glycerol 3-phosphate from glycerol: step 1/1. Its activity is regulated as follows. Inhibited by fructose 1,6-bisphosphate (FBP). Key enzyme in the regulation of glycerol uptake and metabolism. Catalyzes the phosphorylation of glycerol to yield sn-glycerol 3-phosphate. In Acidovorax sp. (strain JS42), this protein is Glycerol kinase.